The chain runs to 86 residues: Class II hydrophobin 2 (86 aa).

The first 15 residues, 1 to 15 (MQFFAVALFATSALA), serve as a signal peptide directing secretion. 4 cysteine pairs are disulfide-bonded: C18-C67, C28-C58, C29-C41, and C68-C79.

It belongs to the cerato-ulmin hydrophobin family. In terms of assembly, homodimer. Homodimers further self-assemble to form highly ordered films at water-air interfaces through intermolecular interactions.

The protein resides in the secreted. The protein localises to the spore wall. It is found in the cell wall. In terms of biological role, aerial growth, conidiation, and dispersal of filamentous fungi in the environment rely upon a capability of their secreting small amphipathic proteins called hydrophobins (HPBs) with low sequence identity. Class I can self-assemble into an outermost layer of rodlet bundles on aerial cell surfaces, conferring cellular hydrophobicity that supports fungal growth, development and dispersal; whereas Class II form highly ordered films at water-air interfaces through intermolecular interactions but contribute nothing to the rodlet structure. Hbf2 is a class II hydrophobin that is involved in sporuration. The polypeptide is Class II hydrophobin 2 (Hypocrea jecorina (Trichoderma reesei)).